A 445-amino-acid polypeptide reads, in one-letter code: MSKKLYIKTYGCQMNVYDSVKMQDLLYPFGYEPTENIEEADVIILNTCHIREKAAEKTYSELGRIKKLQDTRTKQGLSSAIIVVAGCVAQAEGEEIFTRTPYVDIVVGPQSYYNLPELISKVVRHEKHLIDLDFVEEAKFDQLPEQLYPQGTSAFISVQEGCDKFCTFCVVPYTRGAEFSRNVEQVYREALKVVSSGAKEIMLLGQNVNAYHGKGPADKIFSLADLLKHLAQIPNLERLRYTTSHPIDMNNDLIKLYGTEPKLMPFLHLPVQSGSNKILKAMNRKHDREYYFDIINRLREARPDIVLSSDFIVGFPGETDEDFEDTLDLVRRVKYGQCYSFKYSPRPGTPGATRTDQIPEHIKSERLTILQQELMAQQLAFNTSCVGSTMKVLFDRNGKFDDQIIGKTPYMQSVYIQNPNKSLLGKISDVKITKASLNSLTGEIL.

An MTTase N-terminal domain is found at 3 to 124 (KKLYIKTYGC…LPELISKVVR (122 aa)). [4Fe-4S] cluster-binding residues include cysteine 12, cysteine 48, cysteine 87, cysteine 162, cysteine 166, and cysteine 169. The Radical SAM core domain occupies 148-380 (YPQGTSAFIS…QQELMAQQLA (233 aa)). In terms of domain architecture, TRAM spans 383-445 (TSCVGSTMKV…SLNSLTGEIL (63 aa)).

This sequence belongs to the methylthiotransferase family. MiaB subfamily. In terms of assembly, monomer. Requires [4Fe-4S] cluster as cofactor.

Its subcellular location is the cytoplasm. The enzyme catalyses N(6)-dimethylallyladenosine(37) in tRNA + (sulfur carrier)-SH + AH2 + 2 S-adenosyl-L-methionine = 2-methylsulfanyl-N(6)-dimethylallyladenosine(37) in tRNA + (sulfur carrier)-H + 5'-deoxyadenosine + L-methionine + A + S-adenosyl-L-homocysteine + 2 H(+). In terms of biological role, catalyzes the methylthiolation of N6-(dimethylallyl)adenosine (i(6)A), leading to the formation of 2-methylthio-N6-(dimethylallyl)adenosine (ms(2)i(6)A) at position 37 in tRNAs that read codons beginning with uridine. The sequence is that of tRNA-2-methylthio-N(6)-dimethylallyladenosine synthase from Rickettsia conorii (strain ATCC VR-613 / Malish 7).